Consider the following 430-residue polypeptide: 3-phosphoshikimate 1-carboxyvinyltransferase (430 aa).

Residues K21, S22, and R26 each coordinate 3-phosphoshikimate. Residue K21 coordinates phosphoenolpyruvate. Phosphoenolpyruvate contacts are provided by G95 and R123. 3-phosphoshikimate-binding residues include T167, Q169, D315, and K342. Phosphoenolpyruvate is bound at residue Q169. The active-site Proton acceptor is D315. Phosphoenolpyruvate contacts are provided by R346 and R390.

It belongs to the EPSP synthase family. Monomer.

The protein localises to the cytoplasm. It carries out the reaction 3-phosphoshikimate + phosphoenolpyruvate = 5-O-(1-carboxyvinyl)-3-phosphoshikimate + phosphate. Its pathway is metabolic intermediate biosynthesis; chorismate biosynthesis; chorismate from D-erythrose 4-phosphate and phosphoenolpyruvate: step 6/7. Its function is as follows. Catalyzes the transfer of the enolpyruvyl moiety of phosphoenolpyruvate (PEP) to the 5-hydroxyl of shikimate-3-phosphate (S3P) to produce enolpyruvyl shikimate-3-phosphate and inorganic phosphate. This Endomicrobium trichonymphae protein is 3-phosphoshikimate 1-carboxyvinyltransferase.